The chain runs to 410 residues: Arginine deiminase (410 aa).

Cys-400 functions as the Amidino-cysteine intermediate in the catalytic mechanism.

Belongs to the arginine deiminase family.

The protein resides in the cytoplasm. It catalyses the reaction L-arginine + H2O = L-citrulline + NH4(+). The protein operates within amino-acid degradation; L-arginine degradation via ADI pathway; carbamoyl phosphate from L-arginine: step 1/2. The sequence is that of Arginine deiminase from Bacillus cereus (strain ATCC 10987 / NRS 248).